An 82-amino-acid polypeptide reads, in one-letter code: Cytochrome b559 subunit alpha (82 aa).

A helical transmembrane segment spans residues 22 to 36 (VIHFVTLPSIFLAGF). Position 24 (His24) interacts with heme.

The protein belongs to the PsbE/PsbF family. In terms of assembly, heterodimer of an alpha subunit and a beta subunit. PSII is composed of 1 copy each of membrane proteins PsbA, PsbB, PsbC, PsbD, PsbE, PsbF, PsbH, PsbI, PsbJ, PsbK, PsbL, PsbM, PsbT, PsbX, PsbY, PsbZ, Psb30/Ycf12, peripheral proteins PsbO, CyanoQ (PsbQ), PsbU, PsbV and a large number of cofactors. It forms dimeric complexes. It depends on heme b as a cofactor.

The protein resides in the cellular thylakoid membrane. This b-type cytochrome is tightly associated with the reaction center of photosystem II (PSII). PSII is a light-driven water:plastoquinone oxidoreductase that uses light energy to abstract electrons from H(2)O, generating O(2) and a proton gradient subsequently used for ATP formation. It consists of a core antenna complex that captures photons, and an electron transfer chain that converts photonic excitation into a charge separation. The chain is Cytochrome b559 subunit alpha from Parasynechococcus marenigrum (strain WH8102).